We begin with the raw amino-acid sequence, 277 residues long: NH(3)-dependent NAD(+) synthetase (277 aa).

46 to 53 (GISGGQDS) contributes to the ATP binding site. D52 contributes to the Mg(2+) binding site. Deamido-NAD(+) is bound at residue R141. T161 contributes to the ATP binding site. E166 contributes to the Mg(2+) binding site. Deamido-NAD(+)-binding residues include K174 and D181. Residues K190 and T212 each coordinate ATP. 262-263 (HK) provides a ligand contact to deamido-NAD(+).

The protein belongs to the NAD synthetase family. As to quaternary structure, homodimer.

The enzyme catalyses deamido-NAD(+) + NH4(+) + ATP = AMP + diphosphate + NAD(+) + H(+). The protein operates within cofactor biosynthesis; NAD(+) biosynthesis; NAD(+) from deamido-NAD(+) (ammonia route): step 1/1. Catalyzes the ATP-dependent amidation of deamido-NAD to form NAD. Uses ammonia as a nitrogen source. This chain is NH(3)-dependent NAD(+) synthetase, found in Corynebacterium efficiens (strain DSM 44549 / YS-314 / AJ 12310 / JCM 11189 / NBRC 100395).